The sequence spans 344 residues: GTP 3',8-cyclase (344 aa).

The Radical SAM core domain maps to 19–245; the sequence is PFGRAVTYLR…DIPYRTGGPA (227 aa). GTP is bound at residue Arg-28. [4Fe-4S] cluster-binding residues include Cys-35 and Cys-39. S-adenosyl-L-methionine is bound at residue Tyr-41. Cys-42 provides a ligand contact to [4Fe-4S] cluster. Arg-77 contacts GTP. Gly-81 contributes to the S-adenosyl-L-methionine binding site. Thr-111 serves as a coordination point for GTP. Position 135 (Ser-135) interacts with S-adenosyl-L-methionine. Lys-171 serves as a coordination point for GTP. An S-adenosyl-L-methionine-binding site is contributed by Met-205. Positions 268 and 271 each coordinate [4Fe-4S] cluster. 273-275 lines the GTP pocket; the sequence is RVR. [4Fe-4S] cluster is bound at residue Cys-285.

This sequence belongs to the radical SAM superfamily. MoaA family. As to quaternary structure, monomer and homodimer. [4Fe-4S] cluster is required as a cofactor.

The enzyme catalyses GTP + AH2 + S-adenosyl-L-methionine = (8S)-3',8-cyclo-7,8-dihydroguanosine 5'-triphosphate + 5'-deoxyadenosine + L-methionine + A + H(+). It functions in the pathway cofactor biosynthesis; molybdopterin biosynthesis. In terms of biological role, catalyzes the cyclization of GTP to (8S)-3',8-cyclo-7,8-dihydroguanosine 5'-triphosphate. This chain is GTP 3',8-cyclase, found in Brucella canis (strain ATCC 23365 / NCTC 10854 / RM-666).